A 346-amino-acid chain; its full sequence is MPNPISLSHFAFAYGRPENTAVLKAEPADFQVDEHIAYTLSGEGEHLWVWVQKIGQNTDWVAKQIASWAGITAKEMGVAGKKDRQAITRQWMSLHLPGKQAPDIGSLDVPGVTLLKAMRHHRKLQTGGLSGNRFTLVLREINGNLDQIETRLQKIAGKGVPNYFGEQRFGNDFQNLAKATALFQGQIKSPKRHQKSLYISAARSWIFNEILSQRVRQGTWNRAISGDVFQLEGSQKWFADDSDPSLSKRVEEKGLHPTGALTGRGVLPSQSDAFQVEQAVLEKHPFWQAGLEKLGLKQERRALRVLPKEMHWEWLDQQTLSVGFDLPAGSYATMVMRELFEVKLED.

D83 serves as the catalytic Nucleophile. Residues 159–305 enclose the TRUD domain; it reads GVPNYFGEQR…LKQERRALRV (147 aa).

Belongs to the pseudouridine synthase TruD family.

The catalysed reaction is uridine(13) in tRNA = pseudouridine(13) in tRNA. Responsible for synthesis of pseudouridine from uracil-13 in transfer RNAs. This is tRNA pseudouridine synthase D from Hydrogenovibrio crunogenus (strain DSM 25203 / XCL-2) (Thiomicrospira crunogena).